The chain runs to 382 residues: Elongation factor Tu (382 aa).

Residues 1-7, 62-66, and 117-120 contribute to the GTP site; these read HVDHGKT, DCPGH, and NKVD. Positions 1–190 constitute a tr-type G domain; the sequence is HVDHGKTTLT…AVDEYIPTPQ (190 aa). Thr-7 contributes to the Mg(2+) binding site.

Belongs to the TRAFAC class translation factor GTPase superfamily. Classic translation factor GTPase family. EF-Tu/EF-1A subfamily. In terms of assembly, monomer.

It localises to the cytoplasm. It carries out the reaction GTP + H2O = GDP + phosphate + H(+). In terms of biological role, GTP hydrolase that promotes the GTP-dependent binding of aminoacyl-tRNA to the A-site of ribosomes during protein biosynthesis. The sequence is that of Elongation factor Tu from Chloroflexus aurantiacus.